A 721-amino-acid polypeptide reads, in one-letter code: Oviduct-specific glycoprotein (721 aa).

Residues 1–21 form the signal peptide; sequence MGRLLLLAGLVLLMKHSDGTA. Residues 22–385 form the GH18 domain; that stretch reads YKLVCYFTNW…HILNELLVQT (364 aa). C26 and C51 form a disulfide bridge. Residues 71-72, 98-101, Y142, 211-214, and W355 contribute to the chitin site; these read LQ, GGWN, and LSYD. N-linked (GlcNAc...) asparagine glycosylation is found at N402 and N442. Residues 444 to 456 show a composition bias toward polar residues; sequence TTVPSDGSVTPGG. Positions 444–465 are disordered; sequence TTVPSDGSVTPGGTASPRKHAV. N469 is a glycosylation site (N-linked (GlcNAc...) asparagine). A run of 21 repeats spans residues 486 to 492, 493 to 499, 500 to 506, 507 to 513, 514 to 520, 521 to 527, 528 to 534, 535 to 541, 542 to 548, 549 to 555, 556 to 562, 563 to 569, 570 to 576, 577 to 583, 584 to 590, 591 to 597, 598 to 604, 605 to 611, 612 to 618, 619 to 625, and 626 to 632. The interval 486-632 is 21 X 7 AA tandem repeats of S-K-[TAI]-[TI]-[TAP]-[GED]-[IVM]; the sequence is SKTTTGVSKT…PGISKTTPGM (147 aa).

This sequence belongs to the glycosyl hydrolase 18 family. Epithelial cells of the oviduct.

It is found in the cytoplasmic vesicle. It localises to the secretory vesicle. In terms of biological role, binds to oocyte zona pellucida in vivo. May play a role in the fertilization process and/or early embryonic development. This chain is Oviduct-specific glycoprotein (Ovgp1), found in Mus musculus (Mouse).